A 291-amino-acid polypeptide reads, in one-letter code: 5'-3' exonuclease (291 aa).

The region spanning 176–269 (TPKQVIEYKG…VHAALKPIDK (94 aa)) is the 5'-3' exonuclease domain.

5'-3' exonuclease acting preferentially on double-stranded DNA. In Mycoplasma pneumoniae (strain ATCC 29342 / M129 / Subtype 1) (Mycoplasmoides pneumoniae), this protein is 5'-3' exonuclease (polA).